Reading from the N-terminus, the 1163-residue chain is Guanylate cyclase 32E (1163 aa).

Positions 1-25 are cleaved as a signal peptide; sequence MPGPCASAAAFSCILVLLLLGCQRS. The Extracellular portion of the chain corresponds to 29-469; it reads AAGATVSSMR…LCPRKKLDWR (441 aa). Asn-147, Asn-206, Asn-368, and Asn-390 each carry an N-linked (GlcNAc...) asparagine glycan. The chain crosses the membrane as a helical span at residues 470–490; the sequence is YLVSGPLCALVVVVAIALLIK. Residues 491 to 1163 are Cytoplasmic-facing; the sequence is HYRYEQTLAG…RSAPSITFRL (673 aa). A Protein kinase domain is found at 507 to 800; the sequence is MKDVTVINLG…IRLVRMHLKE (294 aa). One can recognise a Guanylate cyclase domain in the interval 873 to 1003; it reads TILFSDIVGF…DTVNTASRME (131 aa).

This sequence belongs to the adenylyl cyclase class-4/guanylyl cyclase family.

It is found in the membrane. The catalysed reaction is GTP = 3',5'-cyclic GMP + diphosphate. This chain is Guanylate cyclase 32E (Gyc32E), found in Drosophila melanogaster (Fruit fly).